We begin with the raw amino-acid sequence, 559 residues long: Small ribosomal subunit protein bS1 (559 aa).

S1 motif domains follow at residues Gly21–Glu87, Asp105–Arg171, Gly192–Lys260, Gly277–Lys347, Gly364–Lys434, and Gly451–Lys520.

This sequence belongs to the bacterial ribosomal protein bS1 family.

In terms of biological role, binds mRNA; thus facilitating recognition of the initiation point. It is needed to translate mRNA with a short Shine-Dalgarno (SD) purine-rich sequence. The sequence is that of Small ribosomal subunit protein bS1 (rpsA) from Pseudomonas aeruginosa (strain ATCC 15692 / DSM 22644 / CIP 104116 / JCM 14847 / LMG 12228 / 1C / PRS 101 / PAO1).